The chain runs to 280 residues: Hydroxyacylglutathione hydrolase, mitochondrial (280 aa).

At lysine 61 the chain carries N6-acetyllysine. Zn(2+) contacts are provided by histidine 74, histidine 76, aspartate 78, and histidine 79. Residue lysine 88 is modified to N6-acetyllysine. Histidine 130 and aspartate 154 together coordinate Zn(2+). Substrate contacts are provided by residues 163–165 (KFY) and 193–195 (HEY). Histidine 193 is a Zn(2+) binding site. Lysine 201 carries the post-translational modification N6-acetyllysine; alternate. Residue lysine 201 is modified to N6-succinyllysine; alternate. 269-272 (RREK) is a substrate binding site.

This sequence belongs to the metallo-beta-lactamase superfamily. Glyoxalase II family. As to quaternary structure, monomer. Zn(2+) is required as a cofactor. As to expression, testis.

The protein resides in the mitochondrion matrix. It is found in the cytoplasm. The catalysed reaction is an S-(2-hydroxyacyl)glutathione + H2O = a 2-hydroxy carboxylate + glutathione + H(+). The enzyme catalyses (R)-S-lactoylglutathione + H2O = (R)-lactate + glutathione + H(+). Its pathway is secondary metabolite metabolism; methylglyoxal degradation; (R)-lactate from methylglyoxal: step 2/2. Thiolesterase that catalyzes the hydrolysis of S-D-lactoyl-glutathione to form glutathione and D-lactic acid. This Callithrix jacchus (White-tufted-ear marmoset) protein is Hydroxyacylglutathione hydrolase, mitochondrial (HAGH).